The following is a 191-amino-acid chain: MEEKVESTTTPDGPCVVSVQETEKWMEEAMRMAKEALENIEVPVGCLMVYNNEVVGKGRNEVNQTKNATRHAEMVAIDQVLDWCHQHGQSPSTVFEHTVLYVTVEPCIMCAAALRLMKIPLVVYGCQNERFGGCGSVLNIASADLPNTGRPFQCIPGYRAEEAVELLKTFYKQENPNAPKSKVRKKDCQKS.

The CMP/dCMP-type deaminase domain maps to 20 to 145; sequence QETEKWMEEA…SVLNIASADL (126 aa). Residue histidine 71 coordinates Zn(2+). Glutamate 73 serves as the catalytic Proton donor. Positions 107 and 110 each coordinate Zn(2+).

This sequence belongs to the cytidine and deoxycytidylate deaminase family. ADAT2 subfamily. Zn(2+) is required as a cofactor.

The enzyme catalyses adenosine(34) in tRNA + H2O + H(+) = inosine(34) in tRNA + NH4(+). Probably participates in deamination of adenosine-34 to inosine in many tRNAs. In Mus musculus (Mouse), this protein is tRNA-specific adenosine deaminase 2 (Adat2).